The sequence spans 100 residues: Small ribosomal subunit protein uS14c (100 aa).

Belongs to the universal ribosomal protein uS14 family. In terms of assembly, part of the 30S ribosomal subunit.

It localises to the plastid. Functionally, binds 16S rRNA, required for the assembly of 30S particles. In Epifagus virginiana (Beechdrops), this protein is Small ribosomal subunit protein uS14c.